The following is a 433-amino-acid chain: Serine hydroxymethyltransferase (433 aa).

121–123 contacts (6S)-5,6,7,8-tetrahydrofolate; the sequence is AHV. K227 carries the N6-(pyridoxal phosphate)lysine modification. E243 serves as a coordination point for (6S)-5,6,7,8-tetrahydrofolate.

This sequence belongs to the SHMT family. Homodimer. The cofactor is pyridoxal 5'-phosphate.

It is found in the cytoplasm. The protein operates within amino-acid biosynthesis; glycine biosynthesis; glycine from L-serine: step 1/1. Catalyzes the reversible interconversion of serine and glycine with a modified folate serving as the one-carbon carrier. Also exhibits a pteridine-independent aldolase activity toward beta-hydroxyamino acids, producing glycine and aldehydes, via a retro-aldol mechanism. In Saccharolobus islandicus (strain Y.N.15.51 / Yellowstone #2) (Sulfolobus islandicus), this protein is Serine hydroxymethyltransferase.